The following is a 123-amino-acid chain: Small ribosomal subunit protein uS12 (123 aa).

The segment at methionine 1–glutamine 29 is disordered. Residues arginine 9–serine 19 are compositionally biased toward basic residues. Aspartate 89 bears the 3-methylthioaspartic acid mark.

Belongs to the universal ribosomal protein uS12 family. As to quaternary structure, part of the 30S ribosomal subunit. Contacts proteins S8 and S17. May interact with IF1 in the 30S initiation complex.

With S4 and S5 plays an important role in translational accuracy. In terms of biological role, interacts with and stabilizes bases of the 16S rRNA that are involved in tRNA selection in the A site and with the mRNA backbone. Located at the interface of the 30S and 50S subunits, it traverses the body of the 30S subunit contacting proteins on the other side and probably holding the rRNA structure together. The combined cluster of proteins S8, S12 and S17 appears to hold together the shoulder and platform of the 30S subunit. The chain is Small ribosomal subunit protein uS12 from Erythrobacter litoralis (strain HTCC2594).